Reading from the N-terminus, the 338-residue chain is MRVLVTGGSGYIGSHTCVQLLQNGHDVVILDNLCNSKRSVLPVIERLGGKHPTFVEGDIRNEALITEILHDHAIDTVIHFAGLKAVGESVARPLEYYDNNVNGTLRLVSAMRAANVKNLIFSSSATVYGDQPKIPYVESFPTGTPQSPYGKSKLMVEQILTDLQKAQPEWSIALLRYFNPVGAHPSGDMGEDPQGIPNNLMPYIAQVAVGRRESLAVFGNDYPTEDGTGVRDYIHVMDLADGHVVAMEKLADKSGVHIYNLGAGVGSSVLDVVNAFSKACGKPINYHFAPRRDGDLPAYWADASKADRELNWRVTRTLDEMAQDTWHWQSRHPQGYPD.

NAD(+) is bound by residues 11–12, 31–36, 58–59, 80–84, Asn-99, Ser-124, Tyr-149, Lys-153, and Phe-178; these read YI, DNLCNS, DI, and FAGLK. Ser-124 and Tyr-149 together coordinate substrate. Tyr-149 functions as the Proton acceptor in the catalytic mechanism. Substrate-binding positions include Asn-179, 199 to 200, 216 to 218, Arg-231, 292 to 295, and Tyr-299; these read NL, AVF, and RDGD.

Belongs to the NAD(P)-dependent epimerase/dehydratase family. As to quaternary structure, homodimer. Requires NAD(+) as cofactor.

The catalysed reaction is UDP-alpha-D-glucose = UDP-alpha-D-galactose. It participates in carbohydrate metabolism; galactose metabolism. Its function is as follows. Involved in the metabolism of galactose. Catalyzes the conversion of UDP-galactose (UDP-Gal) to UDP-glucose (UDP-Glc) through a mechanism involving the transient reduction of NAD. The protein is UDP-glucose 4-epimerase (galE) of Salmonella typhimurium (strain LT2 / SGSC1412 / ATCC 700720).